Reading from the N-terminus, the 255-residue chain is 1-(5-phosphoribosyl)-5-[(5-phosphoribosylamino)methylideneamino] imidazole-4-carboxamide isomerase (255 aa).

Aspartate 12 (proton acceptor) is an active-site residue. Aspartate 131 functions as the Proton donor in the catalytic mechanism.

The protein belongs to the HisA/HisF family.

It is found in the cytoplasm. It carries out the reaction 1-(5-phospho-beta-D-ribosyl)-5-[(5-phospho-beta-D-ribosylamino)methylideneamino]imidazole-4-carboxamide = 5-[(5-phospho-1-deoxy-D-ribulos-1-ylimino)methylamino]-1-(5-phospho-beta-D-ribosyl)imidazole-4-carboxamide. The protein operates within amino-acid biosynthesis; L-histidine biosynthesis; L-histidine from 5-phospho-alpha-D-ribose 1-diphosphate: step 4/9. The chain is 1-(5-phosphoribosyl)-5-[(5-phosphoribosylamino)methylideneamino] imidazole-4-carboxamide isomerase from Cutibacterium acnes (strain DSM 16379 / KPA171202) (Propionibacterium acnes).